The following is a 705-amino-acid chain: Ribosomal RNA large subunit methyltransferase K/L (705 aa).

Positions 43 to 154 (VVYRCCLWSR…GEKGILGFDL (112 aa)) constitute a THUMP domain.

It belongs to the methyltransferase superfamily. RlmKL family.

The protein localises to the cytoplasm. The catalysed reaction is guanosine(2445) in 23S rRNA + S-adenosyl-L-methionine = N(2)-methylguanosine(2445) in 23S rRNA + S-adenosyl-L-homocysteine + H(+). It carries out the reaction guanosine(2069) in 23S rRNA + S-adenosyl-L-methionine = N(2)-methylguanosine(2069) in 23S rRNA + S-adenosyl-L-homocysteine + H(+). Functionally, specifically methylates the guanine in position 2445 (m2G2445) and the guanine in position 2069 (m7G2069) of 23S rRNA. This Aliivibrio fischeri (strain ATCC 700601 / ES114) (Vibrio fischeri) protein is Ribosomal RNA large subunit methyltransferase K/L.